The primary structure comprises 272 residues: Soluble interferon gamma receptor OPG193 (272 aa).

The first 13 residues, 1–13 (MRYIIILAVLFIN), serve as a signal peptide directing secretion. N-linked (GlcNAc...) asparagine; by host glycans are attached at residues asparagine 42, asparagine 150, and asparagine 267.

This sequence belongs to the type II cytokine receptor family. As to quaternary structure, homodimer. Interacts with host IFNG.

The protein localises to the secreted. Its function is as follows. Counteracts the antiviral effects of host IFN-gamma. Acts as a soluble IFN-gamma receptor and thus inhibits the interaction between host IFN-gamma and its receptor. This Bos taurus (Bovine) protein is Soluble interferon gamma receptor OPG193 (OPG193).